The chain runs to 1482 residues: Glutamate receptor ionotropic, NMDA 2B (1482 aa).

An N-terminal signal peptide occupies residues 1–26 (MKPSAECCSPKFWLVLAVLAVSGSKA). Residues 27-557 (RSQKSAPSIG…SAFLEPFSAD (531 aa)) are Extracellular-facing. N-linked (GlcNAc...) asparagine glycosylation occurs at N74. Residues C86 and C321 are joined by a disulfide bond. Zn(2+) contacts are provided by H127 and E284. N341, N348, N444, and N491 each carry an N-linked (GlcNAc...) asparagine glycan. Intrachain disulfides connect C429/C456 and C436/C457. Residues T514 and R519 each coordinate L-glutamate. Residue N542 is glycosylated (N-linked (GlcNAc...) asparagine). A helical transmembrane segment spans residues 558-576 (VWVMMFVMLLIVSAVAVFV). The Cytoplasmic portion of the chain corresponds to 577 to 603 (FEYFSPVGYNRCLADGREPGGPSFTIG). An intramembrane region (discontinuously helical) is located at residues 604-623 (KAIWLLWGLVFNNSVPVQNP). A pore-forming region spans residues 604-623 (KAIWLLWGLVFNNSVPVQNP). The Cytoplasmic segment spans residues 624–630 (KGTTSKI). Residues 631-646 (MVSVWAFFAVIFLASY) traverse the membrane as a helical segment. The Extracellular portion of the chain corresponds to 647–817 (TANLAAFMIQ…VMSSQLDIDN (171 aa)). Residue N688 is glycosylated (N-linked (GlcNAc...) asparagine). Residues 690-691 (ST) and D732 each bind L-glutamate. A disulfide bridge connects residues C746 and C801. A helical transmembrane segment spans residues 818 to 837 (MAGVFYMLGAAMALSLITFI). The Cytoplasmic segment spans residues 838 to 1482 (CEHLFYWQFR…EKLSSIESDV (645 aa)). 4 positions are modified to phosphoserine: S882, S886, S917, and S920. Residues Y962 and Y1039 each carry the phosphotyrosine modification. Residues S1058, S1061, and S1064 each carry the phosphoserine modification. The interval 1074–1097 (EGNAAKRRKQQYKDSLKKRPASAK) is disordered. Residues Y1109 and Y1133 each carry the phosphotyrosine modification. S1143 carries the phosphoserine modification. A Phosphotyrosine modification is found at Y1155. The tract at residues 1162–1194 (FKRDSVSGGGPCTNRSHLKHGTGDKHGVVGGVP) is disordered. Residues S1255 and S1259 each carry the phosphoserine modification. Positions 1266-1277 (PAAPVAVSSNAS) are enriched in low complexity. The tract at residues 1266-1301 (PAAPVAVSSNASTTKYPQSPTNSKAQKKNRNKLRRQ) is disordered. Polar residues predominate over residues 1278–1289 (TTKYPQSPTNSK). Positions 1290–1301 (AQKKNRNKLRRQ) are enriched in basic residues. The tract at residues 1292 to 1304 (KKNRNKLRRQHSY) is interaction with DAPK1. Phosphoserine; by DAPK1 is present on S1303. Y1472 is subject to Phosphotyrosine. Residues 1480–1482 (SDV) carry the PDZ-binding motif.

The protein belongs to the glutamate-gated ion channel (TC 1.A.10.1) family. NR2B/GRIN2B subfamily. As to quaternary structure, heterotetramer. Forms heterotetrameric channels composed of two GluN1/zeta subunits (GRIN1), and two identical GluN2/epsilon subunits (GRIN2A, GRIN2B, GRIN2C or GRIN2D) or GluN3 subunits (GRIN3A or GRIN3B) (in vitro). Can also form heterotetrameric channels that contain at least two GluN1 subunits and at least two different GluN2 subunits (or a combination of one GluN2 and one GluN3 subunits) (in vitro). In vivo, the subunit composition may depend on the expression levels of the different subunits. Found in a complex with GRIN1, GRIN3A and PPP2CB. Interacts with MAGI3. Interacts with HIP1 and NETO1. Interacts with PDZ domains of PATJ, DLG3 and DLG4. Interacts with DAPK1. Found in a complex with GRIN1 and PRR7. Interacts with PRR7. Interacts with CAMK2A. Interacts with ARC; preventing ARC oligomerization. Interacts with TMEM25. Interacts (via the extreme C-terminus) with FRMPD2 (via the second PDZ domain); the interaction is direct and is likely to promote NMDAR-mediated neural signal transmission. GRIN2A binds FRMPD2 with lower affinity than GRIN2B. Interacts with FAM81A; the interaction facilitates condensate formation via liquid-liquid phase separation. Post-translationally, phosphorylated on tyrosine residues. Phosphorylation at Ser-1303 by DAPK1 enhances synaptic NMDA receptor channel activity. Detected in brain (at protein level). Detected throughout the brain, and in brain stem trigeminal nucleus. Detected in forebrain.

The protein resides in the cell membrane. It localises to the postsynaptic cell membrane. Its subcellular location is the cell projection. The protein localises to the dendrite. It is found in the late endosome. The protein resides in the lysosome. It localises to the cytoplasm. Its subcellular location is the cytoskeleton. The catalysed reaction is Ca(2+)(in) = Ca(2+)(out). It catalyses the reaction Na(+)(in) = Na(+)(out). It carries out the reaction K(+)(in) = K(+)(out). Its function is as follows. Component of N-methyl-D-aspartate (NMDA) receptors (NMDARs) that function as heterotetrameric, ligand-gated cation channels with high calcium permeability and voltage-dependent block by Mg(2+). Participates in synaptic plasticity for learning and memory formation by contributing to the long-term depression (LTD) of hippocampus membrane currents. Channel activation requires binding of the neurotransmitter L-glutamate to the GluN2 subunit, glycine or D-serine binding to the GluN1 subunit, plus membrane depolarization to eliminate channel inhibition by Mg(2+). NMDARs mediate simultaneously the potasium efflux and the influx of calcium and sodium. Each GluN2 subunit confers differential attributes to channel properties, including activation, deactivation and desensitization kinetics, pH sensitivity, Ca2(+) permeability, and binding to allosteric modulators. In concert with DAPK1 at extrasynaptic sites, acts as a central mediator for stroke damage. Its phosphorylation at Ser-1303 by DAPK1 enhances synaptic NMDA receptor channel activity inducing injurious Ca2+ influx through them, resulting in an irreversible neuronal death. This is Glutamate receptor ionotropic, NMDA 2B from Mus musculus (Mouse).